Consider the following 527-residue polypeptide: MDWQQLWLAFLLPMTVSGRALGPTEKEAVLDYLLQYGYLQKPLEGADDFRLEDITEALRTFQEASGLPISGQMDDATRARMKQPRCGLEDPFNQKSLKYLLLGHWRKKNLTFRIFNVPSTLSLPRVRAALHQAFKYWSSVAPLTFREVKAGWADIRLSFHGRQSLYCSNTFDGPGKVLAHADIPELGSIHFDKDELWTEGTYQGVNLRIIAAHEVGHALGLGHSRYTQALMAPVYAGYQPFFKLHPDDVAGIQALYGKRSPETRDEEEETEMLTVSPVTAKPGPMPNPCSGEVDAMVLGPRGKTYAFKGDYVWTVTDSGPGPLFQISALWEGLPGNLDAAVYSPRTRRTHFFKGNKVWRYVDFKMSPGFPMKFNRVEPNLDAALYWPVNQKVFLFKGSGYWQWDELARTDLSRYPKPIKELFTGVPDRPSAAMSWQDGQVYFFKGKEYWRLNQQLRVAKGYPRNTTHWMHCGSQTPDTNSSTGDVTPSTTDTVLGTTPSTMGSTLDIPSATDSASLSFSANVTLLGA.

An N-terminal signal peptide occupies residues 1-18; that stretch reads MDWQQLWLAFLLPMTVSG. A propeptide spanning residues 19-98 is cleaved from the precursor; sequence RALGPTEKEA…EDPFNQKSLK (80 aa). The Cysteine switch signature appears at 84-91; the sequence is PRCGLEDP. Cys86 is a Zn(2+) binding site. N-linked (GlcNAc...) asparagine glycosylation occurs at Asn109. His213 contributes to the Zn(2+) binding site. Glu214 is a catalytic residue. Zn(2+)-binding residues include His217 and His223. 4 Hemopexin repeats span residues 286-333, 334-372, 377-425, and 426-471; these read PNPC…WEGL, PGNL…FPMK, EPNL…FTGV, and PDRP…WMHC. A disulfide bond links Cys289 and Cys471. N-linked (GlcNAc...) asparagine glycans are attached at residues Asn464 and Asn479. Residues 473–500 form a disordered region; it reads SQTPDTNSSTGDVTPSTTDTVLGTTPST. Asp512 carries GPI-anchor amidated aspartate lipidation. Residues 513-527 constitute a propeptide, removed in mature form; that stretch reads SASLSFSANVTLLGA. A glycan (N-linked (GlcNAc...) asparagine) is linked at Asn521.

It belongs to the peptidase M10A family. The cofactor is Zn(2+). Ca(2+) is required as a cofactor. In terms of processing, activated by autolytic cleavage after Lys-98. Post-translationally, tyrosine phosphorylated by PKDCC/VLK. Highly expressed in the liver. Expressed in the arterial tunica media of large blood vessels.

The protein resides in the cell membrane. It is found in the secreted. The protein localises to the extracellular space. Its subcellular location is the extracellular matrix. In terms of biological role, endopeptidase that degrades various components of the extracellular matrix, such as aggrecan and cartilage oligomeric matrix protein (comp), during development, haemostasis and pathological conditions (arthritic disease). May also play a role in neovascularization or angiogenesis. Hydrolyzes collagen type IV, laminin, nidogen, nascin-C isoform, fibronectin, and type I gelatin. The protein is Matrix metalloproteinase-19 (Mmp19) of Mus musculus (Mouse).